Here is a 130-residue protein sequence, read N- to C-terminus: uncharacterized protein (130 aa).

A signal peptide spans 1–26; the sequence is MINNFKGILIIILSFLFLLLFKYSNA. Asn58 is a glycosylation site (N-linked (GlcNAc...) asparagine).

Belongs to the Dictyostelium gerABC family.

The protein localises to the secreted. This is an uncharacterized protein from Dictyostelium discoideum (Social amoeba).